The primary structure comprises 291 residues: Feruloyl esterase B (291 aa).

A signal peptide spans 1-18; sequence MLVRSFLGFAVLAATCLA. An N-linked (GlcNAc...) asparagine glycan is attached at Asn117. Catalysis depends on Ser136, which acts as the Charge relay system. N-linked (GlcNAc...) asparagine glycosylation is present at Asn179.

The protein belongs to the carbohydrate esterase 1 (CE1) family. Feruloyl esterase type B subfamily.

Its subcellular location is the secreted. The catalysed reaction is feruloyl-polysaccharide + H2O = ferulate + polysaccharide.. Functionally, feruloyl esterase which acts in synergy with xylanases in degradation of plant cell walls. Hydrolyzes the ester linkage of hydroxycinnamic acids (ferulic acid (FA) and p-coumaric acid) and diferulates present in plant cell walls. Is active on substrates containing ferulic acid ester linked to the C-5 and C-2 linkages of arabinofuranose, while it was found capable of de-esterifying acetylated glucuronoxylans. Efficiently releases ferulic acid (FA) from destarched wheat bran when incubated with an M3 xylanase. The protein is Feruloyl esterase B (Fae1a) of Thermothelomyces thermophilus (strain ATCC 42464 / BCRC 31852 / DSM 1799) (Sporotrichum thermophile).